The primary structure comprises 248 residues: 4-hydroxy-tetrahydrodipicolinate reductase (248 aa).

Residues D32, G74 to T76, and S99 to F102 contribute to the NAD(+) site. H134 (proton donor/acceptor) is an active-site residue. H135 contacts (S)-2,3,4,5-tetrahydrodipicolinate. K138 (proton donor) is an active-site residue. G144–T145 is a (S)-2,3,4,5-tetrahydrodipicolinate binding site.

The protein belongs to the DapB family.

The protein resides in the cytoplasm. It catalyses the reaction (S)-2,3,4,5-tetrahydrodipicolinate + NAD(+) + H2O = (2S,4S)-4-hydroxy-2,3,4,5-tetrahydrodipicolinate + NADH + H(+). The enzyme catalyses (S)-2,3,4,5-tetrahydrodipicolinate + NADP(+) + H2O = (2S,4S)-4-hydroxy-2,3,4,5-tetrahydrodipicolinate + NADPH + H(+). Its pathway is amino-acid biosynthesis; L-lysine biosynthesis via DAP pathway; (S)-tetrahydrodipicolinate from L-aspartate: step 4/4. Its function is as follows. Catalyzes the conversion of 4-hydroxy-tetrahydrodipicolinate (HTPA) to tetrahydrodipicolinate. The polypeptide is 4-hydroxy-tetrahydrodipicolinate reductase (Pelodictyon phaeoclathratiforme (strain DSM 5477 / BU-1)).